A 500-amino-acid polypeptide reads, in one-letter code: Palmitoleoyl-protein carboxylesterase notum1a (500 aa).

The first 26 residues, 1–26, serve as a signal peptide directing secretion; that stretch reads MKRSLWVMQVLHWAVMLALVQCGALG. N101 is a glycosylation site (N-linked (GlcNAc...) asparagine). Catalysis depends on charge relay system residues S237, D344, and H393.

It belongs to the pectinacetylesterase family. Notum subfamily.

It is found in the secreted. The catalysed reaction is [Wnt protein]-O-(9Z)-hexadecenoyl-L-serine + H2O = [Wnt protein]-L-serine + (9Z)-hexadecenoate + H(+). Carboxylesterase that acts as a key negative regulator of the Wnt signaling pathway. Acts by specifically mediating depalmitoleoylation of WNT proteins. Serine palmitoleoylation of WNT proteins is required for efficient binding to frizzled receptors. The protein is Palmitoleoyl-protein carboxylesterase notum1a of Danio rerio (Zebrafish).